The chain runs to 328 residues: Putative tyrosine-protein kinase C03B1.5 (328 aa).

The region spanning 25-288 (WSPALKIGSG…ALHASSQTYL (264 aa)) is the Protein kinase domain. ATP is bound by residues 31–39 (IGSGAFGEV) and Lys62. Asp155 functions as the Proton acceptor in the catalytic mechanism.

The protein belongs to the protein kinase superfamily. Tyr protein kinase family.

It catalyses the reaction L-tyrosyl-[protein] + ATP = O-phospho-L-tyrosyl-[protein] + ADP + H(+). This chain is Putative tyrosine-protein kinase C03B1.5, found in Caenorhabditis elegans.